A 473-amino-acid polypeptide reads, in one-letter code: GTPase Der (473 aa).

2 EngA-type G domains span residues 3–167 and 203–378; these read FTVA…GKDR and LRVA…RVWN. GTP contacts are provided by residues 9 to 16, 56 to 60, 119 to 122, 209 to 216, 256 to 260, and 321 to 324; these read GRPNVGKS, DTAGL, NKSE, GRPNAGKS, DTAGM, and NKWD. The KH-like domain occupies 379-463; it reads KRISTAKLNR…PIRIHFRSAE (85 aa).

Belongs to the TRAFAC class TrmE-Era-EngA-EngB-Septin-like GTPase superfamily. EngA (Der) GTPase family. In terms of assembly, associates with the 50S ribosomal subunit.

Functionally, GTPase that plays an essential role in the late steps of ribosome biogenesis. The chain is GTPase Der from Rhizobium leguminosarum bv. trifolii (strain WSM2304).